Here is a 4083-residue protein sequence, read N- to C-terminus: Dynein heavy chain, cytoplasmic (4083 aa).

A stem region spans residues 1-1745; sequence MTDDQVAQAL…TIEQSCVSFC (1745 aa). 3 coiled-coil regions span residues 127–166, 381–402, and 801–821; these read DAVVSTNSNLEAKQESINSARRKIKDLSLSLQSLQQFIEV, INQWEALLKEFTSLIRELMRKR, and KLDLQNLEVLINKIQLLVDQA. 4 AAA regions span residues 1746–1967, 2026–2265, 2373–2622, and 2716–2980; these read YGFE…VLRN, SYLA…YKAD, SLES…WVRG, and TFAE…GNSQ. ATP is bound by residues 1784–1791, 2064–2071, 2412–2419, and 2754–2761; these read GPAGTGKT, GDAGTGKT, GPPGSGKT, and GPNYSGKT. The segment at 2987–3294 is stalk; the sequence is LTSLRRFQSL…RSIKLMESLT (308 aa). 3 coiled-coil regions span residues 3015 to 3085, 3223 to 3302, and 3527 to 3607; these read LEKL…NERR, LKEE…RWIK, and LEKE…VEDL. AAA regions lie at residues 3364-3592 and 3748-3952; these read MVNP…EIAK and LKSL…FLDH.

It belongs to the dynein heavy chain family. In terms of assembly, consists of at least two heavy chains and a number of intermediate and light chains.

The protein resides in the cytoplasm. The protein localises to the cytoskeleton. Cytoplasmic dynein acts as a motor for the intracellular retrograde motility of vesicles and organelles along microtubules. Dynein has ATPase activity; the force-producing power stroke is thought to occur on release of ADP. Required to maintain uniform nuclear distribution in hyphae. May play an important role in the proper orientation of the mitotic spindle into the budding daughter cell yeast. Probably required for normal progression of the cell cycle. The sequence is that of Dynein heavy chain, cytoplasmic (DYN1) from Eremothecium gossypii (strain ATCC 10895 / CBS 109.51 / FGSC 9923 / NRRL Y-1056) (Yeast).